Consider the following 75-residue polypeptide: Putative primary metabolism protein HVA1 (75 aa).

Residues 1-13 (MSVQDKQGQNINV) are compositionally biased toward polar residues. 2 disordered regions span residues 1 to 24 (MSVQDKQGQNINVGDTVYTPYRGG) and 40 to 75 (AAEKGVKNPPKVLFTDQNNKDVAHNPGTLTDLDKQK).

In terms of biological role, may play a role in primary metabolism. The chain is Putative primary metabolism protein HVA1 from Cryptococcus neoformans var. grubii serotype A (strain H99 / ATCC 208821 / CBS 10515 / FGSC 9487) (Filobasidiella neoformans var. grubii).